A 347-amino-acid polypeptide reads, in one-letter code: MIISKEVKLVVENEDAVTSGEVENSEEEAMELSLRPQTLDQYLGQKRVKKEMSIYIKAAKQRDEALDHVLLYGPPGLGKTTLAFVIANELGVHLKSTSGPAIEKAGDLVALLSDLDPGDVLFIDEIHRLAKPVEEVLYSAMEDYYIDIVIGEGQTTHAVHVPLPPFTLIGATTLAGQLSAPLRDRFGIVEHMQYYTIDELEKIVQRSSDVFHTSIAPEAAHELARRSRGTPRVANRFLKRVRDFAEVKGEKTISLATTEGALKQLQVDDEGLDQTDRRLLRTMIEGYNGGPVGIRTLAANVGEDMETIESLYEPYLLQHGFILLGPRGRMVTDKAYLQLGLPVPGDK.

The interval 13 to 195 (NEDAVTSGEV…FGIVEHMQYY (183 aa)) is large ATPase domain (RuvB-L). Residues Leu34, Arg35, Gly76, Lys79, Thr80, Thr81, 142-144 (EDY), Arg185, Tyr195, and Arg232 each bind ATP. Thr80 is a Mg(2+) binding site. The segment at 196–266 (TIDELEKIVQ…TTEGALKQLQ (71 aa)) is small ATPAse domain (RuvB-S). Residues 269–347 (DEGLDQTDRR…QLGLPVPGDK (79 aa)) form a head domain (RuvB-H) region. Arg329 lines the DNA pocket.

Belongs to the RuvB family. Homohexamer. Forms an RuvA(8)-RuvB(12)-Holliday junction (HJ) complex. HJ DNA is sandwiched between 2 RuvA tetramers; dsDNA enters through RuvA and exits via RuvB. An RuvB hexamer assembles on each DNA strand where it exits the tetramer. Each RuvB hexamer is contacted by two RuvA subunits (via domain III) on 2 adjacent RuvB subunits; this complex drives branch migration. In the full resolvosome a probable DNA-RuvA(4)-RuvB(12)-RuvC(2) complex forms which resolves the HJ.

The protein localises to the cytoplasm. The catalysed reaction is ATP + H2O = ADP + phosphate + H(+). The RuvA-RuvB-RuvC complex processes Holliday junction (HJ) DNA during genetic recombination and DNA repair, while the RuvA-RuvB complex plays an important role in the rescue of blocked DNA replication forks via replication fork reversal (RFR). RuvA specifically binds to HJ cruciform DNA, conferring on it an open structure. The RuvB hexamer acts as an ATP-dependent pump, pulling dsDNA into and through the RuvAB complex. RuvB forms 2 homohexamers on either side of HJ DNA bound by 1 or 2 RuvA tetramers; 4 subunits per hexamer contact DNA at a time. Coordinated motions by a converter formed by DNA-disengaged RuvB subunits stimulates ATP hydrolysis and nucleotide exchange. Immobilization of the converter enables RuvB to convert the ATP-contained energy into a lever motion, pulling 2 nucleotides of DNA out of the RuvA tetramer per ATP hydrolyzed, thus driving DNA branch migration. The RuvB motors rotate together with the DNA substrate, which together with the progressing nucleotide cycle form the mechanistic basis for DNA recombination by continuous HJ branch migration. Branch migration allows RuvC to scan DNA until it finds its consensus sequence, where it cleaves and resolves cruciform DNA. In Lactobacillus helveticus (strain DPC 4571), this protein is Holliday junction branch migration complex subunit RuvB.